The sequence spans 205 residues: Holliday junction branch migration complex subunit RuvA (205 aa).

Residues 1-64 are domain I; sequence MIGRLRGVLV…EDAQLLYGFI (64 aa). The interval 65–143 is domain II; the sequence is TKQERALFRL…SLMEASAGSE (79 aa). The interval 144-156 is flexible linker; that stretch reads REFVLQSNYSPAP. Residues 157–205 form a domain III region; the sequence is TVNSAEEDAISALISLGYKPPQASKSVSAAYKEGMDSETLIKAALKSML.

It belongs to the RuvA family. In terms of assembly, homotetramer. Forms an RuvA(8)-RuvB(12)-Holliday junction (HJ) complex. HJ DNA is sandwiched between 2 RuvA tetramers; dsDNA enters through RuvA and exits via RuvB. An RuvB hexamer assembles on each DNA strand where it exits the tetramer. Each RuvB hexamer is contacted by two RuvA subunits (via domain III) on 2 adjacent RuvB subunits; this complex drives branch migration. In the full resolvosome a probable DNA-RuvA(4)-RuvB(12)-RuvC(2) complex forms which resolves the HJ.

It is found in the cytoplasm. In terms of biological role, the RuvA-RuvB-RuvC complex processes Holliday junction (HJ) DNA during genetic recombination and DNA repair, while the RuvA-RuvB complex plays an important role in the rescue of blocked DNA replication forks via replication fork reversal (RFR). RuvA specifically binds to HJ cruciform DNA, conferring on it an open structure. The RuvB hexamer acts as an ATP-dependent pump, pulling dsDNA into and through the RuvAB complex. HJ branch migration allows RuvC to scan DNA until it finds its consensus sequence, where it cleaves and resolves the cruciform DNA. The sequence is that of Holliday junction branch migration complex subunit RuvA from Shewanella baltica (strain OS223).